Here is an 841-residue protein sequence, read N- to C-terminus: Protein translocase subunit SecA (841 aa).

Residues Gln85, 103 to 107 (GEGKT), and Asp492 contribute to the ATP site. The interval 790–814 (IQGQTTAHQPKEGDEEKQAKKKPVR) is disordered. Residues 798 to 807 (QPKEGDEEKQ) show a composition bias toward basic and acidic residues. Cys825, Cys827, Cys836, and Cys837 together coordinate Zn(2+).

It belongs to the SecA family. In terms of assembly, monomer and homodimer. Part of the essential Sec protein translocation apparatus which comprises SecA, SecYEG and auxiliary proteins SecDF. Other proteins may also be involved. The cofactor is Zn(2+).

Its subcellular location is the cell membrane. It is found in the cytoplasm. It carries out the reaction ATP + H2O + cellular proteinSide 1 = ADP + phosphate + cellular proteinSide 2.. Part of the Sec protein translocase complex. Interacts with the SecYEG preprotein conducting channel. Has a central role in coupling the hydrolysis of ATP to the transfer of proteins into and across the cell membrane, serving as an ATP-driven molecular motor driving the stepwise translocation of polypeptide chains across the membrane. The sequence is that of Protein translocase subunit SecA from Bacillus licheniformis (strain ATCC 14580 / DSM 13 / JCM 2505 / CCUG 7422 / NBRC 12200 / NCIMB 9375 / NCTC 10341 / NRRL NRS-1264 / Gibson 46).